A 494-amino-acid polypeptide reads, in one-letter code: Paired box protein Pax-2-B (494 aa).

Positions 15–141 form a DNA-binding region, paired; sequence RHGGVNQLGG…SSINRIIRTK (127 aa). The segment at 18-74 is PAI subdomain; the sequence is GVNQLGGVFVNGRPLPDVVRQRIVELAHQGVRPCDISRQLRVSHGCVSKILGRYYET. The interval 93–141 is RED subdomain; it reads KVVDKIADYKRQNPTMFAWEIRDRLLAEGICDNDTVPSVSSINRIIRTK. The disordered stretch occupies residues 142–221; that stretch reads VQQPFHPTPD…GDSQSSVESL (80 aa). Positions 163-175 are enriched in low complexity; the sequence is VPSTASPPVSSAS.

As to expression, expression becomes spatially localized at mid-gastrula stages and is localized to the nervous system (midbrain, hindbrain, spinal cord), sensory organs (optic vesicle and stalk, otic vesicle), visceral arches, developing excretory system (pronephros, pronephric duct, rectal diverticulum, proctodaeum) and thryoid gland. Splicing does not appear to be tissue-specific.

The protein localises to the nucleus. In terms of biological role, probable transcription factor. Involved in kidney development, acting synergistically with lhx1/lim-1 in pronephric morphogenesis during the tailbud stages. In Xenopus laevis (African clawed frog), this protein is Paired box protein Pax-2-B (pax2-b).